The following is a 240-amino-acid chain: uncharacterized protein (240 aa).

Residues 1 to 17 (MRMAFMLLALLFSFRNA) form the signal peptide.

This is an uncharacterized protein from Treponema pallidum (strain Nichols).